The primary structure comprises 444 residues: MNNMNKVIIIGGGLAGSEAAWQAANRGCQVELVDMKPEKYSPAHSSPLLGELVCSNSLRSNDPTSAVGLMKREMRFFNSLIMDVADSTAVPAGKALAVDRDKFAEAITARLESHPNISISHREVTAVPEPADHPTIIATGPLTAEDFAESLAELTGRDRLAFYDAIAPILDSESLNMDIVYCKSRYDDGPGDYLNCPMNREEYERFISELASADYMPLKDFEDAKYFEGCLPVEVICSRGVDTLRFGPMKPVGLPDPRTGQDPYAVVQLRMENAEGSTYNMVGFQTKMTYPEQKRIFRMIPGMENVEFVRLGSIHRNTFICAPELLADTLQIKKRPDLLLAGQLSGVEGYIESAAMGLLAGINAARRAMGEELVSPPAEMALGAMVGHLTKSAAKNFQPSNVNFGLFPAWEKKVPKRFRGEKRAEASALALEVWNEKWQISEQV.

FAD is bound at residue G11–G16.

The protein belongs to the MnmG family. TrmFO subfamily. It depends on FAD as a cofactor.

Its subcellular location is the cytoplasm. It catalyses the reaction uridine(54) in tRNA + (6R)-5,10-methylene-5,6,7,8-tetrahydrofolate + NADH + H(+) = 5-methyluridine(54) in tRNA + (6S)-5,6,7,8-tetrahydrofolate + NAD(+). The enzyme catalyses uridine(54) in tRNA + (6R)-5,10-methylene-5,6,7,8-tetrahydrofolate + NADPH + H(+) = 5-methyluridine(54) in tRNA + (6S)-5,6,7,8-tetrahydrofolate + NADP(+). In terms of biological role, catalyzes the folate-dependent formation of 5-methyl-uridine at position 54 (M-5-U54) in all tRNAs. The polypeptide is Methylenetetrahydrofolate--tRNA-(uracil-5-)-methyltransferase TrmFO (Desulfotalea psychrophila (strain LSv54 / DSM 12343)).